Reading from the N-terminus, the 172-residue chain is Adenine phosphoribosyltransferase (172 aa).

This sequence belongs to the purine/pyrimidine phosphoribosyltransferase family. As to quaternary structure, homodimer.

Its subcellular location is the cytoplasm. It carries out the reaction AMP + diphosphate = 5-phospho-alpha-D-ribose 1-diphosphate + adenine. It functions in the pathway purine metabolism; AMP biosynthesis via salvage pathway; AMP from adenine: step 1/1. Catalyzes a salvage reaction resulting in the formation of AMP, that is energically less costly than de novo synthesis. This chain is Adenine phosphoribosyltransferase, found in Trichormus variabilis (strain ATCC 29413 / PCC 7937) (Anabaena variabilis).